We begin with the raw amino-acid sequence, 311 residues long: tRNA-cytidine(32) 2-sulfurtransferase (311 aa).

A PP-loop motif motif is present at residues 47-52; sequence SGGKDS. [4Fe-4S] cluster-binding residues include C122, C125, and C213.

Belongs to the TtcA family. As to quaternary structure, homodimer. Mg(2+) serves as cofactor. It depends on [4Fe-4S] cluster as a cofactor.

It localises to the cytoplasm. It catalyses the reaction cytidine(32) in tRNA + S-sulfanyl-L-cysteinyl-[cysteine desulfurase] + AH2 + ATP = 2-thiocytidine(32) in tRNA + L-cysteinyl-[cysteine desulfurase] + A + AMP + diphosphate + H(+). The protein operates within tRNA modification. Its function is as follows. Catalyzes the ATP-dependent 2-thiolation of cytidine in position 32 of tRNA, to form 2-thiocytidine (s(2)C32). The sulfur atoms are provided by the cysteine/cysteine desulfurase (IscS) system. The protein is tRNA-cytidine(32) 2-sulfurtransferase of Klebsiella pneumoniae subsp. pneumoniae (strain ATCC 700721 / MGH 78578).